Consider the following 207-residue polypeptide: Superoxide dismutase [Mn] (207 aa).

Mn(2+) contacts are provided by H28, H76, D160, and H164.

This sequence belongs to the iron/manganese superoxide dismutase family. It depends on Mn(2+) as a cofactor.

It carries out the reaction 2 superoxide + 2 H(+) = H2O2 + O2. Its function is as follows. Destroys superoxide anion radicals which are normally produced within the cells and which are toxic to biological systems. The protein is Superoxide dismutase [Mn] (sodA) of Nocardia asteroides.